Here is a 715-residue protein sequence, read N- to C-terminus: MKKQIISLGALAVASSLFTWDNKADAIVTKDYSKESRVNENSKYGTLISDWYLKGRLTSLESQFINALDILETYHYGEKEYKDAKDKLMTRILGEDQYLLERKKVQYEEYKKLYQKYKEENPTSKGLKLKTFDQYTIEDLTMREYNELTESLKSAVKDFEKDVEKIENQHHDLKPFTDEMEEKATSRVDDLANKAYSVYFAFVRDTQHKTEALELKAKVDLVLGDEDKPHRISNERIEKEMIKDLESIIEDFFIETGLNKPGNITSYDSSKHHYKNHSEGFEALVKETREAVANADESWKTKTVKKYGESETKSPVVKEENKVEDPQSPKFDNQQEVKTTAGKAEETTQPVAQPLVKIPQGTITGEIVKGPEYPTMENKTLQGEIVQGPDFPTMEQSGPSLSDNYTQPTTPNPILEGLEGSSSKLEIKPQGTESTLKGIQGESSDIEVKPQATETTEASQYGPRPQFNKTPKYVKYRDAGTGIREYNDGTFGYEARPRFNKPSETNAYNVTTNQDGTVSYGARPTQNKASETNAYNVTTHANGQVSYGARPTQKKPSETNAYNVTTHANGQVSYGARPTYNKPSETNAYNVTTHGNGQVSYGARPTYKKPSKTNAYNVTTHANGQVSYGARPTQNKPSETNAYNVTTHANGQVSYGARPTQNKPSETNAYNVTTHGNGQVSYGARPTYNKPSKTNAYNVTTHADGTATYGPRVTK.

Positions 1 to 26 (MKKQIISLGALAVASSLFTWDNKADA) are cleaved as a signal peptide. Positions 306 to 327 (KYGESETKSPVVKEENKVEDPQ) are enriched in basic and acidic residues. Disordered regions lie at residues 306–348 (KYGE…EETT) and 430–470 (QGTE…FNKT). The segment covering 431–443 (GTESTLKGIQGES) has biased composition (polar residues). 8 consecutive repeat copies span residues 495–521 (ARPR…VSYG), 522–548 (ARPT…VSYG), 549–575 (ARPT…VSYG), 576–602 (ARPT…VSYG), 603–629 (ARPT…VSYG), 630–656 (ARPT…VSYG), 657–683 (ARPT…VSYG), and 684–710 (ARPT…ATYG). The segment at 495–710 (ARPRFNKPSE…THADGTATYG (216 aa)) is 8 X 27 AA tandem repeats of A-R-P-[RT]-[FQY]-[NK]-K-[PA]-S-[EK]-T-N-A-Y-N-V-T-T-[NH]-[QAG]-[DN]-G-[TQ]-[VA]-[ST]-Y-G. The segment at 674 to 697 (THGNGQVSYGARPTYNKPSKTNAY) is disordered.

This sequence belongs to the staphylocoagulase family.

Its function is as follows. Staphylocoagulase is an extracellular protein which specifically forms a complex with human prothrombin. This complex named staphylothrombin can clot fibrinogen without any proteolytic cleavage of prothrombin. The polypeptide is Staphylocoagulase (Staphylococcus aureus).